The primary structure comprises 140 residues: L-fucose mutarotase (140 aa).

His-22 functions as the Proton donor in the catalytic mechanism. Substrate-binding positions include Asp-30, Arg-107, and 129-131 (YGN).

Belongs to the RbsD / FucU family. FucU mutarotase subfamily. Homodecamer.

The protein resides in the cytoplasm. The enzyme catalyses alpha-L-fucose = beta-L-fucose. It functions in the pathway carbohydrate metabolism; L-fucose metabolism. Involved in the anomeric conversion of L-fucose. The sequence is that of L-fucose mutarotase from Salmonella paratyphi B (strain ATCC BAA-1250 / SPB7).